We begin with the raw amino-acid sequence, 211 residues long: Sec-independent protein translocase protein TatB (211 aa).

A helical membrane pass occupies residues Met-1 to Gly-21. The tract at residues Ala-175–Pro-211 is disordered. Positions Thr-194–Thr-204 are enriched in polar residues.

This sequence belongs to the TatB family. The Tat system comprises two distinct complexes: a TatABC complex, containing multiple copies of TatA, TatB and TatC subunits, and a separate TatA complex, containing only TatA subunits. Substrates initially bind to the TatABC complex, which probably triggers association of the separate TatA complex to form the active translocon.

It is found in the cell inner membrane. Functionally, part of the twin-arginine translocation (Tat) system that transports large folded proteins containing a characteristic twin-arginine motif in their signal peptide across membranes. Together with TatC, TatB is part of a receptor directly interacting with Tat signal peptides. TatB may form an oligomeric binding site that transiently accommodates folded Tat precursor proteins before their translocation. The protein is Sec-independent protein translocase protein TatB of Xanthomonas oryzae pv. oryzae (strain MAFF 311018).